Reading from the N-terminus, the 413-residue chain is Arginine biosynthesis bifunctional protein ArgJ (413 aa).

Thr-158, Lys-184, Thr-195, Glu-285, Asn-408, and Ser-413 together coordinate substrate. Thr-195 (nucleophile) is an active-site residue.

Belongs to the ArgJ family. In terms of assembly, heterotetramer of two alpha and two beta chains.

The protein resides in the cytoplasm. The catalysed reaction is N(2)-acetyl-L-ornithine + L-glutamate = N-acetyl-L-glutamate + L-ornithine. It catalyses the reaction L-glutamate + acetyl-CoA = N-acetyl-L-glutamate + CoA + H(+). The protein operates within amino-acid biosynthesis; L-arginine biosynthesis; L-ornithine and N-acetyl-L-glutamate from L-glutamate and N(2)-acetyl-L-ornithine (cyclic): step 1/1. It participates in amino-acid biosynthesis; L-arginine biosynthesis; N(2)-acetyl-L-ornithine from L-glutamate: step 1/4. In terms of biological role, catalyzes two activities which are involved in the cyclic version of arginine biosynthesis: the synthesis of N-acetylglutamate from glutamate and acetyl-CoA as the acetyl donor, and of ornithine by transacetylation between N(2)-acetylornithine and glutamate. In Brucella melitensis biotype 1 (strain ATCC 23456 / CCUG 17765 / NCTC 10094 / 16M), this protein is Arginine biosynthesis bifunctional protein ArgJ.